We begin with the raw amino-acid sequence, 1108 residues long: Retinal guanylyl cyclase 1 (1108 aa).

The signal sequence occupies residues M1 to S54. At A55 to E465 the chain is on the extracellular side. A disulfide bond links C108 and C136. A glycan (N-linked (GlcNAc...) asparagine) is linked at N300. The chain crosses the membrane as a helical span at residues P466–L490. The Protein kinase domain occupies R491 to I811. Residues R491–K1108 are Cytoplasmic-facing. The Guanylate cyclase domain occupies T883–E1013. The segment at I1069 to K1108 is disordered.

Belongs to the adenylyl cyclase class-4/guanylyl cyclase family. As to quaternary structure, homodimer; requires homodimerization for guanylyl cyclase activity. Interacts (via C-terminus) with RD3 (via C-terminus); promotes the exit of GUCY2E from the endoplasmic reticulum and its trafficking to the photoreceptor outer segments. Interaction with RD3 negatively regulates GUCY2E guanylate cyclase activity. In terms of processing, there are 9 conserved cysteine residues in sensory guanylate cyclases, 6 in the extracellular domain, which may be involved in intra- or interchain disulfide bonds.

Its subcellular location is the photoreceptor outer segment membrane. It localises to the endoplasmic reticulum membrane. The catalysed reaction is GTP = 3',5'-cyclic GMP + diphosphate. With respect to regulation, activated by GUCA1A when free calcium ions concentration is low, and inhibited by GUCA1A when free calcium ions concentration is high. Negatively regulated by RD3; RD3 inhibits the basal and GUCA1A-stimulated guanylate cyclase activity. Its function is as follows. Catalyzes the synthesis of cyclic GMP (cGMP) in rods and cones of photoreceptors. Plays an essential role in phototransduction, by mediating cGMP replenishment. May also participate in the trafficking of membrane-asociated proteins to the photoreceptor outer segment membrane. The sequence is that of Retinal guanylyl cyclase 1 (Gucy2e) from Mus musculus (Mouse).